Here is a 340-residue protein sequence, read N- to C-terminus: Sideroflexin-5 (340 aa).

4 consecutive transmembrane segments (helical) span residues 103-123 (IFMP…VVGL), 163-183 (FIQG…GLNV), 254-274 (LTRV…MSML), and 287-307 (LLPV…PLAI).

It belongs to the sideroflexin family. As to expression, primarily expressed in the brain.

The protein resides in the mitochondrion inner membrane. It catalyses the reaction citrate(in) = citrate(out). In terms of biological role, mitochondrial amino-acid transporter. Transports citrate. Does not act as a serine transporter: not able to mediate transport of serine into mitochondria. In brown adipose tissue, plays a role in the regulation of UCP1-dependent thermogenesis probably by supporting mitochondrial glycerol-3-phosphate utilization. The chain is Sideroflexin-5 from Homo sapiens (Human).